We begin with the raw amino-acid sequence, 1158 residues long: MESGHLLWALLFMQSLWPQLTDGATRVYYLGIRDVQWNYAPKGRNVITNQPLDSDIVASSFLKSDKNRIGGTYKKTIYKEYKDDSYTDEVAQPAWLGFLGPVLQAEVGDVILIHLKNFATRPYTIHPHGVFYEKDSEGSLYPDGSSGPLKADDSVPPGGSHIYNWTIPEGHAPTDADPACLTWIYHSHVDAPRDIATGLIGPLITCKRGALDGNSPPQRQDVDHDFFLLFSVVDENLSWHLNENIATYCSDPASVDKEDETFQESNRMHAINGFVFGNLPELNMCAQKRVAWHLFGMGNEIDVHTAFFHGQMLTTRGHHTDVANIFPATFVTAEMVPWEPGTWLISCQVNSHFRDGMQALYKVKSCSMAPPVDLLTGKVRQYFIEAHEIQWDYGPMGHDGSTGKNLREPGSISDKFFQKSSSRIGGTYWKVRYEAFQDETFQEKMHLEEDRHLGILGPVIRAEVGDTIQVVFYNRASQPFSMQPHGVFYEKDYEGTVYNDGSSYPGLVAKPFEKVTYRWTVPPHAGPTAQDPACLTWMYFSAADPIRDTNSGLVGPLLVCRAGALGADGKQKGVDKEFFLLFTVLDENKSWYSNANQAAAMLDFRLLSEDIEGFQDSNRMHAINGFLFSNLPRLDMCKGDTVAWHLLGLGTETDVHGVMFQGNTVQLQGMRKGAAMLFPHTFVMAIMQPDNLGTFEIYCQAGSHREAGMRAIYNVSQCPGHQATPRQRYQAARIYYIMAEEVEWDYCPDRSWEREWHNQSEKDSYGYIFLSNKDGLLGSRYKKAVFREYTDGTFRIPRPRTGPEEHLGILGPLIKGEVGDILTVVFKNNASRPYSVHAHGVLESTTVWPLAAEPGEVVTYQWNIPERSGPGPNDSACVSWIYYSAVDPIKDMYSGLVGPLAICQKGILEPHGGRSDMDREFALLFLIFDENKSWYLEENVATHGSQDPGSINLQDETFLESNKMHAINGKLYANLRGLTMYQGERVAWYMLAMGQDVDLHTIHFHAESFLYRNGENYRADVVDLFPGTFEVVEMVASNPGTWLMHCHVTDHVHAGMETLFTVFSRTEHLSPLTVITKETEKAVPPRDIEEGNVKMLGMQIPIKNVEMLASVLVAISVTLLLVVLALGGVVWYQHRQRKLRRNRRSILDDSFKLLSFKQ.

The signal sequence occupies residues 1–23; sequence MESGHLLWALLFMQSLWPQLTDG. Plastocyanin-like domains are found at residues 24-206, 218-366, 370-560, 570-718, 731-903, and 911-1067; these read ATRV…LITC, QRQD…VKSC, PPVD…LLVC, KQKG…VSQC, AARI…LAIC, and HGGR…SRTE. At 24-1110 the chain is on the extracellular side; sequence ATRVYYLGIR…PIKNVEMLAS (1087 aa). Na(+)-binding residues include glycine 70 and tyrosine 73. Cu(2+)-binding residues include histidine 126 and histidine 128. Residue histidine 126 coordinates O2. Ca(2+) is bound by residues lysine 134, aspartate 152, and aspartate 153. Residue asparagine 164 is glycosylated (N-linked (GlcNAc...) asparagine). Cysteine 180 and cysteine 206 are joined by a disulfide. Residues histidine 186 and histidine 188 each coordinate Cu(2+). Histidine 186 is an O2 binding site. Residue asparagine 236 is glycosylated (N-linked (GlcNAc...) asparagine). Na(+) is bound at residue serine 265. A disulfide bond links cysteine 285 and cysteine 366. Cu(2+) is bound by residues histidine 304, cysteine 347, and histidine 352. Na(+) is bound by residues phenylalanine 416, glycine 425, and tyrosine 428. A disulfide bridge links cysteine 534 with cysteine 560. Asparagine 588 is a glycosylation site (N-linked (GlcNAc...) asparagine). Na(+) is bound at residue serine 617. Residues cysteine 637 and cysteine 718 are joined by a disulfide bond. Cu(2+) contacts are provided by histidine 656, cysteine 699, histidine 704, and methionine 709. Residues asparagine 714 and asparagine 758 are each glycosylated (N-linked (GlcNAc...) asparagine). Residues phenylalanine 769 and glycine 778 each contribute to the Na(+) site. Asparagine 829 and asparagine 873 each carry an N-linked (GlcNAc...) asparagine glycan. Cysteine 877 and cysteine 903 are oxidised to a cystine. Asparagine 931 carries N-linked (GlcNAc...) asparagine glycosylation. 8 residues coordinate Cu(2+): histidine 1000, histidine 1003, histidine 1005, histidine 1045, cysteine 1046, histidine 1047, histidine 1051, and methionine 1056. O2 contacts are provided by histidine 1003 and histidine 1005. Histidine 1047 contributes to the O2 binding site. A helical transmembrane segment spans residues 1111 to 1131; the sequence is VLVAISVTLLLVVLALGGVVW. Over 1132–1158 the chain is Cytoplasmic; sequence YQHRQRKLRRNRRSILDDSFKLLSFKQ. Phosphoserine is present on residues serine 1145, serine 1150, and serine 1155.

Belongs to the multicopper oxidase family. Part of a complex composed of SLC40A1/ferroportin, TF/transferrin and HEPH/hephaestin that transfers iron from cells to transferrin. It depends on Cu cation as a cofactor. As to expression, expressed by intestinal absorptive cells (at protein level). Also detected in breast, colon, bone trabecular cells and fibroblasts.

The protein localises to the basolateral cell membrane. It carries out the reaction 4 Fe(2+) + O2 + 4 H(+) = 4 Fe(3+) + 2 H2O. Plasma membrane ferroxidase that mediates the extracellular conversion of ferrous/Fe(2+) iron into its ferric/Fe(3+) form. Couples ferroportin which specifically exports ferrous/Fe(2+) iron from cells to transferrin that only binds and shuttles extracellular ferric/Fe(3+) iron throughout the body. By helping iron transfer from cells to blood mainly contributes to dietary iron absorption by the intestinal epithelium and more generally regulates iron levels in the body. This is Hephaestin from Homo sapiens (Human).